A 384-amino-acid polypeptide reads, in one-letter code: Glucans biosynthesis protein C (384 aa).

A run of 10 helical transmembrane segments spans residues 17–37, 54–74, 91–111, 140–160, 173–193, 212–232, 240–260, 274–294, 311–331, and 338–358; these read AWLMLLGIPFHISLIYSTHSW, FIHAFRMQVFFVISGYFSYML, VGIPMLTAIPLLTLPQFILLQ, LWFLLVLVILTTVSIGIFTWF, AISLAKLSLIFFLLGIAYAAI, FIVMQTLFYVPFFILGALAFI, FTTPSRGCTLGAAVAFIAYLL, TESVITMVMGLWMVNVVFSLG, ASLFIYLVHHPLTLFFGAYIT, and LIGFLCGLIFVMGIALILYEI.

The protein belongs to the acyltransferase 3 family. OpgC subfamily.

It localises to the cell membrane. The protein operates within glycan metabolism; osmoregulated periplasmic glucan (OPG) biosynthesis. Functionally, necessary for the succinyl substitution of periplasmic glucans. Could catalyze the transfer of succinyl residues from the cytoplasmic side of the membrane to the nascent glucan backbones on the periplasmic side of the membrane. This Salmonella schwarzengrund (strain CVM19633) protein is Glucans biosynthesis protein C.